The primary structure comprises 152 residues: Transcriptional repressor NrdR (152 aa).

The segment at C3–C33 is a zinc-finger region. Residues I48 to D138 form the ATP-cone domain.

It belongs to the NrdR family. Zn(2+) is required as a cofactor.

Its function is as follows. Negatively regulates transcription of bacterial ribonucleotide reductase nrd genes and operons by binding to NrdR-boxes. This is Transcriptional repressor NrdR from Pelagibacter ubique (strain HTCC1062).